Here is a 1274-residue protein sequence, read N- to C-terminus: MEELFNALPQPLQQLSLALAGEIPLTDHIFEQAASTWHVQPRSLTYKLLDHIPFSTPVVVPPSIYHSLDWSKCFAVNQDRVERVPTIDDPDDVYVPNSDIGPLLTSLHTIPDYGFLHPAIENDATTLRAERARCASTFYKIASSQARQVKLDPIRMLGFLLLVQARPRVPSGLVTDQPTRRDPTQSPALHAIWQVMQYYKVAGVYYAPALVVPSGAIWWIPPPGKRNVVSVQYLLTDLINLAILAHMTDMSPTLELTGVLMYLRAASSHSHAYTLLQMKSVFPALSLRSMYRNKGFGGKAPAIEWTEPRSKYKFRWTGVTQLHDGLRPRSPSMDVPTLEVLTKYELVDIGHIIIRERNAHPRHNHDSVRFVRDVMALTSGMYLVRQPTMSVLREYSQVPDIKDPIPPSAWTGPIGNVRYLLPSVQGPARHLYDTWRAAARQIAQDPQWHDPLNQAIMRAQYVTARGGSSASLKFALKVTGIVLPEYDDSKVKKSSKIYQAAQIARIAFMLLIAAIHAEVTMGIRNQVQRRARSIMPLNVIQQAISAPHTLVANYINKHMNLSTTSGSVVTDKVIPLILYASTPPNTVVNVDIKACDASITYNYFLSVICGAMHEGFEVGNADAAFMGVPSTIVSDRRSSVAPYSRPISGLQTMVQHLADLYAAGFRYSVSDAFSSGNKFSFPTSTFPSGSTATSTEHTANNSTMMEYFLNVHAPSHVKSASLKRILTDMTIQRNYVCQGDDGILLLPHEAASKISADDMNELLTCLRDYGQLFGWNYDIDWSDTAEYLKLYALMGCRIPNTSRHPPVGKEYAAPQTDEIWPSLIDIVIGHHLNGVTDVLNWREWLRFSWAFACYSSRGGYTNPKGQSFSAQYPWWTFVYLGIPPILLPGQTPFIHSCYMPPGDQGMFSILNGWRDWLISHASTTLPPLRHNHPVWGLSDVPSLLSQFGVYAGYHAAQHYRRPKPAPETASSDSINQITSDLTEYLFYDSALKARVMKGRYNWERLSSSLSLNVGSRVPSLFDVPGKWVAAGRDAEKPPPSSVEDMFTSLNRCIRRPTHSFSRLLELYLRVHVTLGESIPLAIDPDVPQVAGADPANDDHWFKYTCLGDIPSATRNYFGESLFVGRVVSGLDVEAVDATLLRLKILGAPPEAFIAVLNGIGMSDSEAHQIAGRISLANAQLVQIARVVHLSIPSSWMTLNTGPYIHHHAYDFKPGITQPSAKSRDKSIWMSPILKLLCTSYAMTVAGPVRTSIVTEIDGSAAALSGNLRVWMRDV.

The region spanning 561–798 is the RdRp catalytic domain; sequence LSTTSGSVVT…KLYALMGCRI (238 aa).

The protein belongs to the reoviridae RNA-directed RNA polymerase family.

It localises to the virion. The catalysed reaction is RNA(n) + a ribonucleoside 5'-triphosphate = RNA(n+1) + diphosphate. RNA-directed RNA polymerase that is involved in transcription and genome replication. Following infection, it catalyzes the synthesis of fully conservative plus strands. After core assembly, which consists in recruitment of one capped plus-strand for each genomic segments and polymerase complexes, the polymerase switches mode and catalyzes the synthesis of complementary minus-strands. This chain is RNA-directed RNA polymerase VP2 (S2), found in Aquareovirus C (isolate Golden shiner/USA/GSRV/1977) (AQRV-C).